A 242-amino-acid chain; its full sequence is Myogenic factor 6 (242 aa).

The interval 31–63 is disordered; sequence SPLYPGSDGTLSPCQDQMPPEAGSDSSGEEHVL. A bHLH domain is found at 93–144; it reads DRRKAATLRERRRLKKINEAFEALKRRTVANPNQRLPKVEILRSAINYIERL.

Efficient DNA binding requires dimerization with another bHLH protein.

The protein localises to the nucleus. Functionally, involved in muscle differentiation (myogenic factor). Induces fibroblasts to differentiate into myoblasts. Probable sequence specific DNA-binding protein. The protein is Myogenic factor 6 (MYF6) of Sus scrofa (Pig).